A 210-amino-acid chain; its full sequence is Protoporphyrinogen IX oxidase (210 aa).

5 helical membrane passes run tryptophan 22–valine 42, tyrosine 74–phenylalanine 94, glycine 103–glycine 123, phenylalanine 141–phenylalanine 161, and leucine 165–isoleucine 185. Position 27 (histidine 27) interacts with heme. Position 108 (lysine 108) interacts with heme.

This sequence belongs to the HemJ family. As to quaternary structure, homodimer. Can also form higher oligomers, most probably tetramers. Interacts with Sll1106, however it is unlikely that Sll1106 is required for PPO function. It depends on heme b as a cofactor.

Its subcellular location is the cell membrane. It catalyses the reaction protoporphyrinogen IX + 3 A = protoporphyrin IX + 3 AH2. The protein operates within porphyrin-containing compound metabolism; protoporphyrin-IX biosynthesis; protoporphyrin-IX from protoporphyrinogen-IX: step 1/1. Its function is as follows. Catalyzes the oxidation of protoporphyrinogen IX to protoporphyrin IX. Is involved in the biosynthesis of tetrapyrrole molecules like heme and chlorophyll. Does not use oxygen or artificial electron acceptors such as menadione or benzoquinone. Is functionally coupled with coproporphyrinogen III oxidase (CPO). Is essential for growth. This is Protoporphyrinogen IX oxidase from Synechocystis sp. (strain ATCC 27184 / PCC 6803 / Kazusa).